The following is a 522-amino-acid chain: Cytochrome P450 4F4 (522 aa).

2 helical membrane passes run 15-35 (TSLP…VRVL) and 87-107 (GFMT…PDVI). Residues E328 and C468 each contribute to the heme site.

It belongs to the cytochrome P450 family. It depends on heme as a cofactor. As to expression, expressed in hepatocytes. High expression in liver and kidney. Lower expression in brain.

The protein resides in the endoplasmic reticulum membrane. It is found in the microsome membrane. The catalysed reaction is (5Z,8Z,11Z,14Z)-eicosatetraenoate + reduced [NADPH--hemoprotein reductase] + O2 = 20-hydroxy-(5Z,8Z,11Z,14Z)-eicosatetraenoate + oxidized [NADPH--hemoprotein reductase] + H2O + H(+). It carries out the reaction leukotriene B4 + reduced [NADPH--hemoprotein reductase] + O2 = 20-hydroxy-leukotriene B4 + oxidized [NADPH--hemoprotein reductase] + H2O + H(+). It catalyses the reaction 6-trans-leukotriene B4 + reduced [NADPH--hemoprotein reductase] + O2 = 20-hydroxy-6-trans-leukotriene B4 + oxidized [NADPH--hemoprotein reductase] + H2O + H(+). The enzyme catalyses prostaglandin A1 + reduced [NADPH--hemoprotein reductase] + O2 = 20-hydroxy prostaglandin A1 + oxidized [NADPH--hemoprotein reductase] + H2O + H(+). The catalysed reaction is prostaglandin E1 + reduced [NADPH--hemoprotein reductase] + O2 = 20-hydroxy prostaglandin E1 + oxidized [NADPH--hemoprotein reductase] + H2O + H(+). In terms of biological role, a cytochrome P450 monooxygenase involved in the metabolism of arachidonic acid and its oxygenated derivatives. Mechanistically, uses molecular oxygen inserting one oxygen atom into a substrate, and reducing the second into a water molecule, with two electrons provided by NADPH via cytochrome P450 reductase (CPR; NADPH-ferrihemoprotein reductase). Participates in the conversion of arachidonic acid to omega-hydroxyeicosatetraenoic acid (20-HETE), a signaling molecule acting both as vasoconstrictive and natriuretic with overall effect on arterial blood pressure. Hydroxylates the terminal carbon (omega-hydroxylation) of inflammatory lipid mediators, including prostaglandin (PG) A1, PGE1 and leukotriene B4 (LTB4), and may play a role in inactivation of these oxylipins during the resolution of inflammation. The chain is Cytochrome P450 4F4 from Rattus norvegicus (Rat).